A 777-amino-acid chain; its full sequence is MPKTNRAQPGRLSSRFWRLLGASTEKNRSRSLTLVTDSSEYDDEAAGLTDEQLRKAAGLLNLEDLAESEDIPQFLAIAREAAERATGLRPFDVQLLGALRMLAGDVIEMATGEGKTLAGAIAAAGYALAGRHVHVVTINDYLARRDAEWMGPLIEAMGLTVGWITAESSSEERRAAYGCDVTYASVNEIGFDVLRDQLVTDVADLVSPNPDVALIDEADSVLVDEALVPLVLAGTTHRETPRLEIIKLVGELEAGTDYDTDADSRNVHLTDVGARKVEKALGGIDLYSEEHVGTTLTEVNVALHAHVLLQRDVHYIVRDDAVHLINASRGRIAQLQRWPDGLQAAVEAKEGIETTETGEVLDTITVQALINRYATVCGMTGTALAAGEQLRQFYKLGVSPIPPNKPNIREDEADRVYITAAAKNDAIVEHIIEVHETGQPVLVGTRDVAESEELHERLLRRGVPAVVLNAKNDAEEAQVIAEAGKFGVVTVSTQMAGRGTDIRLGGSDEADHDRVAELGGLHVVGTGRHHTERLDNQLRGRAGRQGDPGSSVFFSSWEDDVVAANLDRNKLPMETDPETGDGRIVSPKAAGLLDHAQRVAEGRMLDVHANTWRYNQLIAQQRAIIVDRRNTLLRTATAREELAELAPKRYRELAEEIPEERLETICRHIMLYHLDRGWADHLAYLADIRESIHLRALGRQNPLDEFHRLAVDAFASLAADAIEAAQQTFETANVLEDEPGLDLSKLARPTSTWTYMVNDNPLSDDTLSTLSLPGVFR.

ATP contacts are provided by residues Q94, 112-116 (GEGKT), and D501.

This sequence belongs to the SecA family. As to quaternary structure, monomer and homodimer. Part of the essential Sec protein translocation apparatus which comprises SecA, SecYEG and auxiliary proteins SecDF. Other proteins may also be involved.

Its subcellular location is the cell membrane. It is found in the cytoplasm. The enzyme catalyses ATP + H2O + cellular proteinSide 1 = ADP + phosphate + cellular proteinSide 2.. Its function is as follows. Part of the Sec protein translocase complex. Interacts with the SecYEG preprotein conducting channel. Has a central role in coupling the hydrolysis of ATP to the transfer of proteins into and across the cell membrane, serving as an ATP-driven molecular motor driving the stepwise translocation of polypeptide chains across the membrane. The polypeptide is Protein translocase subunit SecA (Mycobacterium avium (strain 104)).